The sequence spans 220 residues: MKKEKAVVVFSGGQDSTTCLFWAMEQFAEVEAVTFNYNQRHKLEIDCAAEIAKELGIKHTVLDMSLLNQLAPNALTRTDMEITHEEGELPSTFVDGRNLLFLSFAAVLAKQVGARHIVTGVCETDFSGYPDCRDVFVKSLNVTLNLSMDYPFVIHTPLMWIDKAETWKLSDELGAFEFVREKTLTCYNGIIGDGCGECPACQLRKAGLDTYLQEREGASN.

Residue 10 to 20 (FSGGQDSTTCL) participates in ATP binding. Zn(2+) contacts are provided by Cys186, Cys195, Cys198, and Cys201.

This sequence belongs to the QueC family. As to quaternary structure, homodimer. The cofactor is Zn(2+).

The enzyme catalyses 7-carboxy-7-deazaguanine + NH4(+) + ATP = 7-cyano-7-deazaguanine + ADP + phosphate + H2O + H(+). The protein operates within purine metabolism; 7-cyano-7-deazaguanine biosynthesis. Functionally, catalyzes the ATP-dependent conversion of 7-carboxy-7-deazaguanine (CDG) to 7-cyano-7-deazaguanine (preQ(0)). The sequence is that of 7-cyano-7-deazaguanine synthase from Bacillus cereus (strain AH187).